Consider the following 89-residue polypeptide: Long neurotoxin homolog Pa ID (89 aa).

The first 21 residues, methionine 1 to threonine 21, serve as a signal peptide directing secretion. Disulfide bonds link cysteine 24–cysteine 42, cysteine 35–cysteine 63, cysteine 48–cysteine 52, cysteine 67–cysteine 78, and cysteine 79–cysteine 84.

Belongs to the three-finger toxin family. Long-chain subfamily. Type II alpha-neurotoxin sub-subfamily. As to expression, expressed by the venom gland.

The protein localises to the secreted. In terms of biological role, binds with high affinity to muscular (alpha-1/CHRNA1) and neuronal (alpha-7/CHRNA7) nicotinic acetylcholine receptor (nAChR) and inhibits acetylcholine from binding to the receptor, thereby impairing neuromuscular and neuronal transmission. This Pseudechis australis (Mulga snake) protein is Long neurotoxin homolog Pa ID.